The following is a 511-amino-acid chain: Membrane-bound lytic murein transglycosylase F (511 aa).

Positions 1–19 (MKKLKINYLLIGIVTLLLA) are cleaved as a signal peptide. Residues 20 to 269 (AALWPSIPWS…RLEEKYLGHG (250 aa)) form a non-LT domain region. The tract at residues 270–511 (NDFDYVDTRT…ARMKLPGHLY (242 aa)) is LT domain. Residue Glu-314 is part of the active site.

This sequence in the N-terminal section; belongs to the bacterial solute-binding protein 3 family. It in the C-terminal section; belongs to the transglycosylase Slt family.

It is found in the cell outer membrane. It carries out the reaction Exolytic cleavage of the (1-&gt;4)-beta-glycosidic linkage between N-acetylmuramic acid (MurNAc) and N-acetylglucosamine (GlcNAc) residues in peptidoglycan, from either the reducing or the non-reducing ends of the peptidoglycan chains, with concomitant formation of a 1,6-anhydrobond in the MurNAc residue.. In terms of biological role, murein-degrading enzyme that degrades murein glycan strands and insoluble, high-molecular weight murein sacculi, with the concomitant formation of a 1,6-anhydromuramoyl product. Lytic transglycosylases (LTs) play an integral role in the metabolism of the peptidoglycan (PG) sacculus. Their lytic action creates space within the PG sacculus to allow for its expansion as well as for the insertion of various structures such as secretion systems and flagella. The polypeptide is Membrane-bound lytic murein transglycosylase F (Klebsiella pneumoniae subsp. pneumoniae (strain ATCC 700721 / MGH 78578)).